Here is a 119-residue protein sequence, read N- to C-terminus: Large ribosomal subunit protein bL17 (119 aa).

The protein belongs to the bacterial ribosomal protein bL17 family. As to quaternary structure, part of the 50S ribosomal subunit. Contacts protein L32.

This Psychrobacter sp. (strain PRwf-1) protein is Large ribosomal subunit protein bL17.